A 350-amino-acid polypeptide reads, in one-letter code: N(4)-bis(aminopropyl)spermidine synthase (350 aa).

This sequence belongs to the branched-chain polyamine synthase family.

The protein resides in the cytoplasm. It carries out the reaction 2 S-adenosyl 3-(methylsulfanyl)propylamine + spermidine = N(4)-bis(aminopropyl)spermidine + 2 S-methyl-5'-thioadenosine + 2 H(+). It participates in amine and polyamine biosynthesis. Its function is as follows. Involved in the biosynthesis of branched-chain polyamines, which support the growth of thermophiles under high-temperature conditions. Catalyzes the sequential condensation of spermidine with the aminopropyl groups of decarboxylated S-adenosylmethionines to produce N(4)-bis(aminopropyl)spermidine via N(4)-aminopropylspermidine. This is N(4)-bis(aminopropyl)spermidine synthase from Methanocaldococcus jannaschii (strain ATCC 43067 / DSM 2661 / JAL-1 / JCM 10045 / NBRC 100440) (Methanococcus jannaschii).